A 391-amino-acid chain; its full sequence is Phosphoglycerate kinase (391 aa).

Substrate contacts are provided by residues 21-23 (DLN), Arg36, 59-62 (HLGR), Arg114, and Arg147. ATP is bound by residues Lys198, Glu315, and 344–347 (GGDT).

It belongs to the phosphoglycerate kinase family. As to quaternary structure, monomer.

The protein resides in the cytoplasm. It carries out the reaction (2R)-3-phosphoglycerate + ATP = (2R)-3-phospho-glyceroyl phosphate + ADP. Its pathway is carbohydrate degradation; glycolysis; pyruvate from D-glyceraldehyde 3-phosphate: step 2/5. The polypeptide is Phosphoglycerate kinase (Actinobacillus pleuropneumoniae serotype 5b (strain L20)).